Reading from the N-terminus, the 296-residue chain is GTPase Era (296 aa).

Residues 2-171 (KAGFIAVVGR…LEALDPYLED (170 aa)) form the Era-type G domain. The G1 stretch occupies residues 10–17 (GRPNVGKS). 10–17 (GRPNVGKS) contributes to the GTP binding site. The tract at residues 36–40 (GTTRD) is G2. The segment at 57-60 (DTPG) is G3. GTP is bound by residues 57–61 (DTPGI) and 120–123 (NKVD). Residues 120–123 (NKVD) are G4. A G5 region spans residues 150–152 (ASG). The KH type-2 domain maps to 202 to 279 (TRDEIPHSVA…YLGLWVKVKD (78 aa)).

The protein belongs to the TRAFAC class TrmE-Era-EngA-EngB-Septin-like GTPase superfamily. Era GTPase family. As to quaternary structure, monomer.

It localises to the cytoplasm. Its subcellular location is the cell inner membrane. In terms of biological role, an essential GTPase that binds both GDP and GTP, with rapid nucleotide exchange. Plays a role in 16S rRNA processing and 30S ribosomal subunit biogenesis and possibly also in cell cycle regulation and energy metabolism. The protein is GTPase Era of Fusobacterium nucleatum subsp. nucleatum (strain ATCC 25586 / DSM 15643 / BCRC 10681 / CIP 101130 / JCM 8532 / KCTC 2640 / LMG 13131 / VPI 4355).